Here is an 801-residue protein sequence, read N- to C-terminus: Putative mRNA-capping enzyme P5 (801 aa).

This sequence belongs to the phytoreovirus protein P5 family.

It localises to the virion. The protein localises to the host cytoplasm. The catalysed reaction is a 5'-end diphospho-ribonucleoside in mRNA + GTP + H(+) = a 5'-end (5'-triphosphoguanosine)-ribonucleoside in mRNA + diphosphate. The protein operates within mRNA processing; mRNA capping. In terms of biological role, enzyme involved in mRNA capping (Potential). Binds to GTP and might have guanylyltransferase activity. Together with the RNA-directed RNA polymerase P1 and protein P7, forms an transcriptional complex positioned near the channels situated at each of the five-fold vertices of the core. This Alopecurus aequalis (Barnyard grass) protein is Putative mRNA-capping enzyme P5.